The following is a 330-amino-acid chain: Aspartate--ammonia ligase (330 aa).

It belongs to the class-II aminoacyl-tRNA synthetase family. AsnA subfamily.

It is found in the cytoplasm. It carries out the reaction L-aspartate + NH4(+) + ATP = L-asparagine + AMP + diphosphate + H(+). The protein operates within amino-acid biosynthesis; L-asparagine biosynthesis; L-asparagine from L-aspartate (ammonia route): step 1/1. This is Aspartate--ammonia ligase from Streptococcus pyogenes serotype M2 (strain MGAS10270).